A 166-amino-acid polypeptide reads, in one-letter code: Interferon gamma (166 aa).

Residues methionine 1 to cysteine 23 form the signal peptide. Glutamine 24 carries the pyrrolidone carboxylic acid modification. N-linked (GlcNAc...) asparagine glycans are attached at residues asparagine 39 and asparagine 106.

It belongs to the type II (or gamma) interferon family. In terms of assembly, homodimer. Interacts with IFNGR1 (via extracellular domain); this interaction promotes IFNGR1 dimerization. Released primarily from activated T lymphocytes.

The protein resides in the secreted. In terms of biological role, type II interferon produced by immune cells such as T-cells and NK cells that plays crucial roles in antimicrobial, antiviral, and antitumor responses by activating effector immune cells and enhancing antigen presentation. Primarily signals through the JAK-STAT pathway after interaction with its receptor IFNGR1 to affect gene regulation. Upon IFNG binding, IFNGR1 intracellular domain opens out to allow association of downstream signaling components JAK2, JAK1 and STAT1, leading to STAT1 activation, nuclear translocation and transcription of IFNG-regulated genes. Many of the induced genes are transcription factors such as IRF1 that are able to further drive regulation of a next wave of transcription. Plays a role in class I antigen presentation pathway by inducing a replacement of catalytic proteasome subunits with immunoproteasome subunits. In turn, increases the quantity, quality, and repertoire of peptides for class I MHC loading. Increases the efficiency of peptide generation also by inducing the expression of activator PA28 that associates with the proteasome and alters its proteolytic cleavage preference. Up-regulates as well MHC II complexes on the cell surface by promoting expression of several key molecules such as cathepsins B/CTSB, H/CTSH, and L/CTSL. Participates in the regulation of hematopoietic stem cells during development and under homeostatic conditions by affecting their development, quiescence, and differentiation. In Camelus bactrianus (Bactrian camel), this protein is Interferon gamma (IFNG).